The following is a 471-amino-acid chain: Secretogranin-3 (471 aa).

The N-terminal stretch at 1–22 (MGFLWTGTWIVVLMLHSSPIQA) is a signal peptide. 2 disordered regions span residues 23–72 (FPKP…ESNY) and 86–105 (EKEK…NDNK). Residues 32-45 (KPLHNRELSAERPL) are compositionally biased toward basic and acidic residues. Ser40 bears the Phosphoserine mark. O-linked (Xyl...) (chondroitin sulfate) serine glycosylation is present at Ser40. Asn71 is a glycosylation site (N-linked (GlcNAc...) asparagine). A compositionally biased stretch (basic and acidic residues) spans 86–96 (EKEKNEKERQS). N-linked (GlcNAc...) asparagine glycosylation is present at Asn353. The interval 357 to 409 (LFAVPSEKSHEETDSTKEEAAKMEKEYGTLKDSTKDDDSNPRGKTDEHKGKTE) is disordered. A compositionally biased stretch (basic and acidic residues) spans 363 to 409 (EKSHEETDSTKEEAAKMEKEYGTLKDSTKDDDSNPRGKTDEHKGKTE). At Ser365 the chain carries Phosphoserine.

In terms of assembly, interacts with CHGA. Interacts with secretogranin II/SCG2. Interacts (via C-terminus) with CPE.

It localises to the cytoplasmic vesicle. The protein localises to the secretory vesicle. It is found in the secretory vesicle membrane. The protein resides in the secreted. Member of the granin protein family that regulates the biogenesis of secretory granules. Acts as a sorting receptor for intragranular proteins including chromogranin A/CHGA. May also play a role in angiogenesis. Promotes endothelial proliferation, migration and tube formation through MEK/ERK signaling pathway. This Bos taurus (Bovine) protein is Secretogranin-3 (SCG3).